The primary structure comprises 355 residues: Ubiquinone biosynthesis protein COQ4 homolog, mitochondrial (355 aa).

Positions 134, 135, 138, and 150 each coordinate Zn(2+).

This sequence belongs to the COQ4 family. Component of a multi-subunit COQ enzyme complex. Requires Zn(2+) as cofactor.

Its subcellular location is the mitochondrion inner membrane. It catalyses the reaction a 4-hydroxy-3-methoxy-5-(all-trans-polyprenyl)benzoate + H(+) = a 2-methoxy-6-(all-trans-polyprenyl)phenol + CO2. It participates in cofactor biosynthesis; ubiquinone biosynthesis. In terms of biological role, lyase that catalyzes the C1-decarboxylation of 4-hydroxy-3-methoxy-5-(all-trans-polyprenyl)benzoic acid into 2-methoxy-6-(all-trans-polyprenyl)phenol during ubiquinone biosynthesis. In Plasmodium chabaudi chabaudi, this protein is Ubiquinone biosynthesis protein COQ4 homolog, mitochondrial.